Here is a 1481-residue protein sequence, read N- to C-terminus: Cystic fibrosis transmembrane conductance regulator (1481 aa).

Over 1–77 (MQRSPLEKAS…KLINALRRCF (77 aa)) the chain is Cytoplasmic. A helical membrane pass occupies residues 78-98 (FWRFMFYGILLYLGEVTKAVQ). The 285-residue stretch at 81–365 (FMFYGILLYL…WAVQTWYDSL (285 aa)) folds into the ABC transmembrane type-1 1 domain. Residues 99–122 (PLLLGRIIASYDPDNKEERSIAIY) are Extracellular-facing. Residues 123 to 146 (LGIGLCLLFIVRTLLLHPAIFGLH) form a helical membrane-spanning segment. At 147 to 195 (HIGMQMRIAMFSLIYKKTLKLSSRVLDKISIGQLVSLLSNNLNKFDEGL) the chain is on the cytoplasmic side. A helical transmembrane segment spans residues 196 to 216 (ALAHFVWIVPLQVALLMGLIW). Topologically, residues 217–222 (ELLQAS) are extracellular. The helical transmembrane segment at 223–243 (AFCGLGFLIVLALFQAGLGRM) threads the bilayer. The Cytoplasmic portion of the chain corresponds to 244–298 (MMKYRDQRAGKINERLVITSEMIENIQSVKAYCWEEAMEKMIENLRQTELKLTRK). The helical transmembrane segment at 299–319 (AAYVRYFNSSAFFFSGFFVVF) threads the bilayer. Residues 320-339 (LSVLPYALIKGIVLRKIFTT) are Extracellular-facing. A helical membrane pass occupies residues 340–358 (ISFCIVLRMAVTRQFPWAV). Residues 359–858 (QTWYDSLGAI…YLRYITVHKS (500 aa)) are Cytoplasmic-facing. ATP contacts are provided by residues Trp401, Ser434, 458-465 (GSTGAGKT), and Gln493. The ABC transporter 1 domain maps to 423-646 (NDDDSLFFSN…RPDFSSKLMG (224 aa)). A lipid anchor (S-palmitoyl cysteine) is attached at Cys524. Residues Ser549 and Ser660 each carry the phosphoserine modification. The segment at 654–831 (SAERRNSILT…EEINEEDLKE (178 aa)) is disordered R region. The residue at position 670 (Ser670) is a Phosphoserine; by PKA. The residue at position 686 (Ser686) is a Phosphoserine. A Glycyl lysine isopeptide (Lys-Gly) (interchain with G-Cter in ubiquitin) cross-link involves residue Lys688. Residues Ser700 and Ser712 each carry the phosphoserine modification. A Phosphothreonine modification is found at Thr717. 6 positions are modified to phosphoserine: Ser737, Ser753, Ser768, Ser790, Ser795, and Ser813. A helical membrane pass occupies residues 859-879 (LIFVLIWCLVIFLAEVAASLV). The ABC transmembrane type-1 2 domain maps to 859–1155 (LIFVLIWCLV…AVNSSIDVDS (297 aa)). At 880-918 (VLWFLGNTPPQDKGNSTYSRNNSYAVIITRTSSYYVFYI) the chain is on the extracellular side. N-linked (GlcNAc...) asparagine glycans are attached at residues Asn894 and Asn900. A discontinuously helical membrane pass occupies residues 919–939 (YVGVADTLLAMGFFRGLPLVH). The Cytoplasmic segment spans residues 940-990 (TLITVSKILHHKMLHSVLQAPMSTLNTLKAGGILNRFSKDIAILDDLLPLT). A helical transmembrane segment spans residues 991 to 1011 (IFDFIQLLLIVIGAIAVVAVL). At 1012–1013 (QP) the chain is on the extracellular side. Residues 1014–1034 (YIFVATVPVIVAFIMLRAYFL) traverse the membrane as a helical segment. Over 1035 to 1095 (QTSQQLKQLE…TANWFLYLST (61 aa)) the chain is Cytoplasmic. The chain crosses the membrane as a helical span at residues 1096 to 1116 (LRWFQMRIEMIFVIFFIAVTF). Residues 1117-1130 (ISILTTGEGEGTVG) are Extracellular-facing. Residues 1131-1151 (IILTLAMNIMSTLQWAVNSSI) traverse the membrane as a helical segment. Residues 1152 to 1481 (DVDSLMRSVS…TEEEVQDTRL (330 aa)) lie on the Cytoplasmic side of the membrane. One can recognise an ABC transporter 2 domain in the interval 1211–1444 (MTVKDLTAKY…RSLFRQAISP (234 aa)). ATP is bound by residues Tyr1220 and 1245–1252 (GRTGSGKS). The segment at 1387–1481 (RTLKQAFADC…TEEEVQDTRL (95 aa)) is interaction with GORASP2. Cys1396 carries S-palmitoyl cysteine lipidation. 2 positions are modified to phosphoserine: Ser1445 and Ser1457. The segment at 1462-1481 (QPQIAALKEETEEEVQDTRL) is disordered. Residues 1471-1481 (ETEEEVQDTRL) are compositionally biased toward acidic residues. The short motif at 1479–1481 (TRL) is the PDZ-binding element.

This sequence belongs to the ABC transporter superfamily. ABCC family. CFTR transporter (TC 3.A.1.202) subfamily. In terms of assembly, monomer; does not require oligomerization for channel activity. May form oligomers in the membrane. Interacts with SLC26A3, SLC26A6 and NHERF1. Interacts with SHANK2. Interacts with MYO6. Interacts (via C-terminus) with GOPC (via PDZ domain); this promotes CFTR internalization and thereby decreases channel activity. Interacts with SLC4A7 through NHERF1. Found in a complex with MYO5B and RAB11A. Interacts with ANO1. Interacts with SLC26A8. Interacts with AHCYL1; the interaction increases CFTR activity. Interacts with CSE1L. The core-glycosylated form interacts with GORASP2 (via PDZ GRASP-type 1 domain) in respone to ER stress. Interacts with MARCHF2; the interaction leads to CFTR ubiqtuitination and degradation. Interacts with ADGRG2. Post-translationally, N-glycosylated. In terms of processing, phosphorylated; cAMP treatment promotes phosphorylation and activates the channel. Dephosphorylation decreases the ATPase activity (in vitro). Phosphorylation at PKA sites activates the channel. Phosphorylation at PKC sites enhances the response to phosphorylation by PKA. Phosphorylated by AMPK; this inhibits channel activity. Ubiquitinated, leading to its degradation in the lysosome. Deubiquitination by USP10 in early endosomes enhances its endocytic recycling to the cell membrane. Ubiquitinated by RNF185 during ER stress. Ubiquitinated by MARCHF2.

It is found in the apical cell membrane. It localises to the early endosome membrane. The protein resides in the cell membrane. Its subcellular location is the recycling endosome membrane. The protein localises to the endoplasmic reticulum membrane. It is found in the nucleus. The enzyme catalyses ATP + H2O + closed Cl(-) channel = ADP + phosphate + open Cl(-) channel.. It carries out the reaction chloride(in) = chloride(out). It catalyses the reaction hydrogencarbonate(in) = hydrogencarbonate(out). The catalysed reaction is ATP + H2O = ADP + phosphate + H(+). In terms of biological role, epithelial ion channel that plays an important role in the regulation of epithelial ion and water transport and fluid homeostasis. Mediates the transport of chloride ions across the cell membrane. Possesses an intrinsic ATPase activity and utilizes ATP to gate its channel; the passive flow of anions through the channel is gated by cycles of ATP binding and hydrolysis by the ATP-binding domains. The ion channel is also permeable to HCO(3)(-); selectivity depends on the extracellular chloride concentration. Exerts its function also by modulating the activity of other ion channels and transporters. Contributes to the regulation of the pH and the ion content of the epithelial fluid layer. Modulates the activity of the epithelial sodium channel (ENaC) complex, in part by regulating the cell surface expression of the ENaC complex. May regulate bicarbonate secretion and salvage in epithelial cells by regulating the transporter SLC4A7. Can inhibit the chloride channel activity of ANO1. Plays a role in the chloride and bicarbonate homeostasis during sperm epididymal maturation and capacitation. This chain is Cystic fibrosis transmembrane conductance regulator, found in Chlorocebus aethiops (Green monkey).